The primary structure comprises 164 residues: Nucleotide-binding protein Daro_3028 (164 aa).

This sequence belongs to the YajQ family.

Nucleotide-binding protein. In Dechloromonas aromatica (strain RCB), this protein is Nucleotide-binding protein Daro_3028.